We begin with the raw amino-acid sequence, 247 residues long: Chymase (247 aa).

Positions 1-19 (MLLLPLPLLLFFLCSRAEA) are cleaved as a signal peptide. A propeptide spans 20–21 (GE) (activation peptide). Positions 22–245 (IIGGTECKPH…YRPWINKILQ (224 aa)) constitute a Peptidase S1 domain. The cysteines at positions 51 and 67 are disulfide-linked. The active-site Charge relay system is the histidine 66. Residues asparagine 80 and asparagine 103 are each glycosylated (N-linked (GlcNAc...) asparagine). Aspartate 110 acts as the Charge relay system in catalysis. 2 cysteine pairs are disulfide-bonded: cysteine 144–cysteine 209 and cysteine 175–cysteine 188. Serine 203 acts as the Charge relay system in catalysis.

This sequence belongs to the peptidase S1 family. Granzyme subfamily.

The protein resides in the secreted. It localises to the cytoplasmic granule. It catalyses the reaction Preferential cleavage: Phe-|-Xaa &gt; Tyr-|-Xaa &gt; Trp-|-Xaa &gt; Leu-|-Xaa.. Major secreted protease of mast cells with suspected roles in vasoactive peptide generation, extracellular matrix degradation, and regulation of gland secretion. This is Chymase (CMA1) from Macaca fascicularis (Crab-eating macaque).